A 322-amino-acid polypeptide reads, in one-letter code: Cytochrome c biogenesis protein CcsA (322 aa).

8 consecutive transmembrane segments (helical) span residues 6 to 26 (LQLI…FLFF), 45 to 65 (LIAN…AGYF), 69 to 89 (NLYE…LFLY), 97 to 117 (LLDN…HFIL), 144 to 164 (MISY…LYFL), 230 to 250 (LITF…VWAN), 265 to 285 (WALI…IKGW), and 291 to 311 (AMVA…VNLL).

Belongs to the CcmF/CycK/Ccl1/NrfE/CcsA family. May interact with Ccs1.

The protein resides in the plastid. It localises to the cyanelle thylakoid membrane. Its function is as follows. Required during biogenesis of c-type cytochromes (cytochrome c6 and cytochrome f) at the step of heme attachment. The sequence is that of Cytochrome c biogenesis protein CcsA from Cyanophora paradoxa.